A 439-amino-acid chain; its full sequence is Homogentisate 1,2-dioxygenase (439 aa).

Catalysis depends on histidine 293, which acts as the Proton acceptor. Fe cation is bound by residues histidine 336 and glutamate 342. Positions 351 and 372 each coordinate homogentisate. Histidine 372 serves as a coordination point for Fe cation.

This sequence belongs to the homogentisate dioxygenase family. As to quaternary structure, hexamer; dimer of trimers. Requires Fe cation as cofactor.

The enzyme catalyses homogentisate + O2 = 4-maleylacetoacetate + H(+). It participates in amino-acid degradation; L-phenylalanine degradation; acetoacetate and fumarate from L-phenylalanine: step 4/6. Its function is as follows. Involved in the catabolism of homogentisate (2,5-dihydroxyphenylacetate or 2,5-OH-PhAc), a central intermediate in the degradation of phenylalanine and tyrosine. Catalyzes the oxidative ring cleavage of the aromatic ring of homogentisate to yield maleylacetoacetate. In Cupriavidus necator (strain ATCC 17699 / DSM 428 / KCTC 22496 / NCIMB 10442 / H16 / Stanier 337) (Ralstonia eutropha), this protein is Homogentisate 1,2-dioxygenase.